A 248-amino-acid polypeptide reads, in one-letter code: NADP-dependent 3-hydroxy acid dehydrogenase YdfG (248 aa).

NADP(+) is bound by residues 7-12 (GATAGF), 32-33 (RR), 54-55 (DV), and asparagine 81. Serine 134 is a binding site for substrate. Residues tyrosine 147, lysine 151, and 177–185 (PGLVGGTEF) contribute to the NADP(+) site. Residue tyrosine 147 is the Proton acceptor of the active site.

It belongs to the short-chain dehydrogenases/reductases (SDR) family. As to quaternary structure, homotetramer.

The enzyme catalyses 3-hydroxypropanoate + NADP(+) = 3-oxopropanoate + NADPH + H(+). It catalyses the reaction L-allo-threonine + NADP(+) = aminoacetone + CO2 + NADPH. Its function is as follows. NADP-dependent dehydrogenase with broad substrate specificity acting on 3-hydroxy acids. Catalyzes the NADP-dependent oxidation of L-allo-threonine to L-2-amino-3-keto-butyrate, which is spontaneously decarboxylated into aminoacetone. Also acts on D-threonine, L-serine, D-serine, D-3-hydroxyisobutyrate, L-3-hydroxyisobutyrate, D-glycerate and L-glycerate. Able to catalyze the reduction of the malonic semialdehyde to 3-hydroxypropionic acid. YdfG is apparently supplementing RutE, the presumed malonic semialdehyde reductase involved in pyrimidine degradation since both are able to detoxify malonic semialdehyde. In Escherichia coli O6:H1 (strain CFT073 / ATCC 700928 / UPEC), this protein is NADP-dependent 3-hydroxy acid dehydrogenase YdfG.